A 330-amino-acid polypeptide reads, in one-letter code: Glycerol-3-phosphate dehydrogenase [NAD(P)+] (330 aa).

4 residues coordinate NADPH: Ser11, Phe12, Arg32, and Lys106. Lys106, Gly133, and Ser135 together coordinate sn-glycerol 3-phosphate. Ala137 is a binding site for NADPH. The sn-glycerol 3-phosphate site is built by Lys188, Asp241, Ser251, Arg252, and Asn253. Lys188 acts as the Proton acceptor in catalysis. Arg252 provides a ligand contact to NADPH. Residues Val276 and Glu278 each coordinate NADPH.

It belongs to the NAD-dependent glycerol-3-phosphate dehydrogenase family.

Its subcellular location is the cytoplasm. The enzyme catalyses sn-glycerol 3-phosphate + NAD(+) = dihydroxyacetone phosphate + NADH + H(+). It catalyses the reaction sn-glycerol 3-phosphate + NADP(+) = dihydroxyacetone phosphate + NADPH + H(+). It participates in membrane lipid metabolism; glycerophospholipid metabolism. Catalyzes the reduction of the glycolytic intermediate dihydroxyacetone phosphate (DHAP) to sn-glycerol 3-phosphate (G3P), the key precursor for phospholipid synthesis. The chain is Glycerol-3-phosphate dehydrogenase [NAD(P)+] from Clostridium botulinum (strain Eklund 17B / Type B).